The chain runs to 332 residues: Ketol-acid reductoisomerase (NADP(+)) (332 aa).

Residues 4–184 (ARMYYDEDAD…GGTRAGILET (181 aa)) enclose the KARI N-terminal Rossmann domain. NADP(+) is bound by residues 27–30 (YGSQ), Ser-53, Ser-55, and 85–88 (DEVQ). His-110 is an active-site residue. Gly-136 is a binding site for NADP(+). In terms of domain architecture, KARI C-terminal knotted spans 185-330 (TFREEAETDL…ADLRKMMSWL (146 aa)). The Mg(2+) site is built by Asp-193, Glu-197, Glu-229, and Glu-233. Substrate is bound at residue Ser-254.

It belongs to the ketol-acid reductoisomerase family. Mg(2+) is required as a cofactor.

The enzyme catalyses (2R)-2,3-dihydroxy-3-methylbutanoate + NADP(+) = (2S)-2-acetolactate + NADPH + H(+). It catalyses the reaction (2R,3R)-2,3-dihydroxy-3-methylpentanoate + NADP(+) = (S)-2-ethyl-2-hydroxy-3-oxobutanoate + NADPH + H(+). Its pathway is amino-acid biosynthesis; L-isoleucine biosynthesis; L-isoleucine from 2-oxobutanoate: step 2/4. The protein operates within amino-acid biosynthesis; L-valine biosynthesis; L-valine from pyruvate: step 2/4. Its function is as follows. Involved in the biosynthesis of branched-chain amino acids (BCAA). Catalyzes an alkyl-migration followed by a ketol-acid reduction of (S)-2-acetolactate (S2AL) to yield (R)-2,3-dihydroxy-isovalerate. In the isomerase reaction, S2AL is rearranged via a Mg-dependent methyl migration to produce 3-hydroxy-3-methyl-2-ketobutyrate (HMKB). In the reductase reaction, this 2-ketoacid undergoes a metal-dependent reduction by NADPH to yield (R)-2,3-dihydroxy-isovalerate. This is Ketol-acid reductoisomerase (NADP(+)) from Gloeobacter violaceus (strain ATCC 29082 / PCC 7421).